Here is a 356-residue protein sequence, read N- to C-terminus: Red-sensitive opsin-2 (356 aa).

Residues 1 to 48 (MAEWANAAFAARRRGDETTRDNAFSYTNSNNTRDPFEGPNYHIAPRWV) are Extracellular-facing. The N-linked (GlcNAc...) asparagine glycan is linked to Asn30. The chain crosses the membrane as a helical span at residues 49-73 (YNVATVWMFFVVVASTFTNGLVLVA). The Cytoplasmic segment spans residues 74–85 (TAKFKKLRHPLN). A helical transmembrane segment spans residues 86–111 (WILVNLAIADLGETLFASTISVINQV). At 112 to 125 (FGYFILGHPMCIFE) the chain is on the extracellular side. Cys122 and Cys199 are joined by a disulfide. The helical transmembrane segment at 126 to 145 (GYTVSVCGIAGLWSLTVISW) threads the bilayer. Over 146–164 (ERWVVVCKPFGNVKFDGKW) the chain is Cytoplasmic. A helical membrane pass occupies residues 165–188 (ASAGIIFSWVWAAVWCAPPIFGWS). At 189 to 214 (RYWPHGLKTSCGPDVFGGNEDPGVQS) the chain is on the extracellular side. The chain crosses the membrane as a helical span at residues 215–242 (YMLVLMITCCILPLAIIILCYIAVFLAI). Residues 243–264 (HAVAQQQKDSESTQKAEKEVSR) lie on the Cytoplasmic side of the membrane. A helical membrane pass occupies residues 265 to 288 (MVVVMILAFCLCWGPYTAFACFAA). Topologically, residues 289–296 (ANPGYAFH) are extracellular. The chain crosses the membrane as a helical span at residues 297 to 321 (PLAAAMPAYFAKSATIYNPIIYVFM). Position 308 is an N6-(retinylidene)lysine (Lys308). Residues 322-356 (NRQFRVCIMQLFGKKVDDGSEVSTSKTEVSSVAPA) lie on the Cytoplasmic side of the membrane.

It belongs to the G-protein coupled receptor 1 family. Opsin subfamily. Post-translationally, phosphorylated on some or all of the serine and threonine residues present in the C-terminal region.

It is found in the membrane. In terms of biological role, visual pigments are the light-absorbing molecules that mediate vision. They consist of an apoprotein, opsin, covalently linked to cis-retinal. This Danio rerio (Zebrafish) protein is Red-sensitive opsin-2 (opn1lw2).